A 556-amino-acid polypeptide reads, in one-letter code: Dihydroxy-acid dehydratase (556 aa).

Position 78 (Asp-78) interacts with Mg(2+). [2Fe-2S] cluster is bound at residue Cys-119. Mg(2+) is bound by residues Asp-120 and Lys-121. Lys-121 is modified (N6-carboxylysine). A [2Fe-2S] cluster-binding site is contributed by Cys-191. Glu-442 contributes to the Mg(2+) binding site. Ser-468 functions as the Proton acceptor in the catalytic mechanism.

The protein belongs to the IlvD/Edd family. Homodimer. [2Fe-2S] cluster serves as cofactor. The cofactor is Mg(2+).

The enzyme catalyses (2R)-2,3-dihydroxy-3-methylbutanoate = 3-methyl-2-oxobutanoate + H2O. It carries out the reaction (2R,3R)-2,3-dihydroxy-3-methylpentanoate = (S)-3-methyl-2-oxopentanoate + H2O. Its pathway is amino-acid biosynthesis; L-isoleucine biosynthesis; L-isoleucine from 2-oxobutanoate: step 3/4. It participates in amino-acid biosynthesis; L-valine biosynthesis; L-valine from pyruvate: step 3/4. In terms of biological role, functions in the biosynthesis of branched-chain amino acids. Catalyzes the dehydration of (2R,3R)-2,3-dihydroxy-3-methylpentanoate (2,3-dihydroxy-3-methylvalerate) into 2-oxo-3-methylpentanoate (2-oxo-3-methylvalerate) and of (2R)-2,3-dihydroxy-3-methylbutanoate (2,3-dihydroxyisovalerate) into 2-oxo-3-methylbutanoate (2-oxoisovalerate), the penultimate precursor to L-isoleucine and L-valine, respectively. This chain is Dihydroxy-acid dehydratase, found in Clostridium kluyveri (strain NBRC 12016).